We begin with the raw amino-acid sequence, 34 residues long: Photosystem II reaction center protein Y (34 aa).

The Lumenal segment spans residues 1–5 (DWRVL). Residues 6-22 (VVLLPVLLAAGWAVRNI) traverse the membrane as a helical segment. The Cytoplasmic segment spans residues 23–34 (LPYAVKQVQKLL).

It belongs to the PsbY family. In terms of assembly, PSII is composed of 1 copy each of membrane proteins PsbA, PsbB, PsbC, PsbD, PsbE, PsbF, PsbH, PsbI, PsbJ, PsbK, PsbL, PsbM, PsbT, PsbX, PsbY, PsbZ, Psb30/Ycf12, peripheral proteins PsbO, CyanoQ (PsbQ), PsbU, PsbV and a large number of cofactors. It forms dimeric complexes. This protein is only loosely associated with PSII, and is not often found in crystals. PSII binds multiple chlorophylls, carotenoids and specific lipids. serves as cofactor.

It is found in the cellular thylakoid membrane. Its function is as follows. Loosely associated component of the core of photosystem II (PSII). PSII is a light-driven water plastoquinone oxidoreductase, using light energy to abstract electrons from H(2)O, generating a proton gradient subsequently used for ATP formation. The protein is Photosystem II reaction center protein Y of Thermostichus vulcanus (Synechococcus vulcanus).